The chain runs to 473 residues: Photosystem II CP43 reaction center protein (473 aa).

The propeptide occupies 1-14 (MKILYSLRRFYHVE). Threonine 15 is modified (N-acetylthreonine). Residue threonine 15 is modified to Phosphothreonine. The next 5 membrane-spanning stretches (helical) occupy residues 69–93 (LFEV…PHLA), 134–155 (LLGP…KDRN), 178–200 (KALY…RKIT), 255–275 (KPFA…LSYS), and 291–312 (WFNN…ASQA). Glutamate 367 serves as a coordination point for [CaMn4O5] cluster. Residues 447–471 (RARAAAAGFEKGIDRDLEPVLYMNP) form a helical membrane-spanning segment.

The protein belongs to the PsbB/PsbC family. PsbC subfamily. PSII is composed of 1 copy each of membrane proteins PsbA, PsbB, PsbC, PsbD, PsbE, PsbF, PsbH, PsbI, PsbJ, PsbK, PsbL, PsbM, PsbT, PsbX, PsbY, PsbZ, Psb30/Ycf12, at least 3 peripheral proteins of the oxygen-evolving complex and a large number of cofactors. It forms dimeric complexes. The cofactor is Binds multiple chlorophylls and provides some of the ligands for the Ca-4Mn-5O cluster of the oxygen-evolving complex. It may also provide a ligand for a Cl- that is required for oxygen evolution. PSII binds additional chlorophylls, carotenoids and specific lipids..

It localises to the plastid. It is found in the chloroplast thylakoid membrane. One of the components of the core complex of photosystem II (PSII). It binds chlorophyll and helps catalyze the primary light-induced photochemical processes of PSII. PSII is a light-driven water:plastoquinone oxidoreductase, using light energy to abstract electrons from H(2)O, generating O(2) and a proton gradient subsequently used for ATP formation. In Hordeum vulgare (Barley), this protein is Photosystem II CP43 reaction center protein.